A 597-amino-acid polypeptide reads, in one-letter code: Lipoprotein LpqB (597 aa).

The N-terminal stretch at 1 to 28 (MTPGSRSAMRSRSVCGAIALAVLVTVSG) is a signal peptide. A lipid anchor (N-palmitoyl cysteine) is attached at cysteine 29. Cysteine 29 carries the S-diacylglycerol cysteine lipid modification. Positions 39–51 (QAIGTINRDSPGS) are enriched in polar residues. Residues 39 to 59 (QAIGTINRDSPGSSVAAPAPG) form a disordered region.

This sequence belongs to the LpqB lipoprotein family.

It localises to the cell membrane. This Rhodococcus opacus (strain B4) protein is Lipoprotein LpqB.